We begin with the raw amino-acid sequence, 252 residues long: Imidazole glycerol phosphate synthase subunit HisF (252 aa).

Catalysis depends on residues Asp11 and Asp130.

This sequence belongs to the HisA/HisF family. Heterodimer of HisH and HisF.

Its subcellular location is the cytoplasm. It catalyses the reaction 5-[(5-phospho-1-deoxy-D-ribulos-1-ylimino)methylamino]-1-(5-phospho-beta-D-ribosyl)imidazole-4-carboxamide + L-glutamine = D-erythro-1-(imidazol-4-yl)glycerol 3-phosphate + 5-amino-1-(5-phospho-beta-D-ribosyl)imidazole-4-carboxamide + L-glutamate + H(+). Its pathway is amino-acid biosynthesis; L-histidine biosynthesis; L-histidine from 5-phospho-alpha-D-ribose 1-diphosphate: step 5/9. In terms of biological role, IGPS catalyzes the conversion of PRFAR and glutamine to IGP, AICAR and glutamate. The HisF subunit catalyzes the cyclization activity that produces IGP and AICAR from PRFAR using the ammonia provided by the HisH subunit. The chain is Imidazole glycerol phosphate synthase subunit HisF from Bacillus cereus (strain ZK / E33L).